The primary structure comprises 36 residues: Kappa-theraphotoxin-Pg1a (36 aa).

3 disulfides stabilise this stretch: Cys-4–Cys-19, Cys-11–Cys-24, and Cys-18–Cys-31.

Belongs to the neurotoxin 10 (Hwtx-1) family. 44 (Jztx-4) subfamily. As to expression, expressed by the venom gland.

It is found in the secreted. Functionally, gating modifier of Kv2.1/KCNB1 (IC(50)=5.1 nM), Kv2.2/KCNB2 and Kv4.3/KCND3 channels (IC(50)=39 nM). Acts by shifting the channel activation to more depolarized potentials by stabilizing the resting conformation of the voltage sensor. It completely inhibits opening of the Kv2.1/KCNB1 channel at negative membrane voltages and dramatically shifts channel activation to positive voltages. May act by partitioning into lipid membranes and then by binding the voltage sensor paddle of the channel from a place within the membrane. This is Kappa-theraphotoxin-Pg1a from Chilobrachys guangxiensis (Chinese earth tiger tarantula).